Here is a 205-residue protein sequence, read N- to C-terminus: Small ribosomal subunit protein uS4 (205 aa).

The S4 RNA-binding domain occupies 93–171 (SRVSSVLYRS…SPHYLEVDRE (79 aa)).

It belongs to the universal ribosomal protein uS4 family. Part of the 30S ribosomal subunit. Contacts protein S5. The interaction surface between S4 and S5 is involved in control of translational fidelity.

Functionally, one of the primary rRNA binding proteins, it binds directly to 16S rRNA where it nucleates assembly of the body of the 30S subunit. Its function is as follows. With S5 and S12 plays an important role in translational accuracy. In Neorickettsia sennetsu (strain ATCC VR-367 / Miyayama) (Ehrlichia sennetsu), this protein is Small ribosomal subunit protein uS4.